The sequence spans 570 residues: Phosphoenolpyruvate-protein phosphotransferase (570 aa).

The active-site Tele-phosphohistidine intermediate is the H189. Positions 296 and 332 each coordinate phosphoenolpyruvate. Residues E431 and D455 each coordinate Mg(2+). Phosphoenolpyruvate contacts are provided by residues 454-455 (ND) and R465. C502 functions as the Proton donor in the catalytic mechanism.

The protein belongs to the PEP-utilizing enzyme family. Homodimer. Mg(2+) serves as cofactor.

It localises to the cytoplasm. It catalyses the reaction L-histidyl-[protein] + phosphoenolpyruvate = N(pros)-phospho-L-histidyl-[protein] + pyruvate. Functionally, general (non sugar-specific) component of the phosphoenolpyruvate-dependent sugar phosphotransferase system (sugar PTS). This major carbohydrate active-transport system catalyzes the phosphorylation of incoming sugar substrates concomitantly with their translocation across the cell membrane. Enzyme I transfers the phosphoryl group from phosphoenolpyruvate (PEP) to the phosphoryl carrier protein (HPr). In Buchnera aphidicola subsp. Schizaphis graminum (strain Sg), this protein is Phosphoenolpyruvate-protein phosphotransferase (ptsI).